The chain runs to 301 residues: Cell division control protein 2 homolog 1 (301 aa).

Positions 5–297 (YERLQKIGEG…AAQALEHPYF (293 aa)) constitute a Protein kinase domain. Residues 11 to 19 (IGEGSYGVV) and lysine 34 contribute to the ATP site. Serine 15 bears the Phosphoserine mark. At tyrosine 16 the chain carries Phosphotyrosine. Aspartate 127 (proton acceptor) is an active-site residue. Threonine 160 carries the post-translational modification Phosphothreonine; by CAK.

The protein belongs to the protein kinase superfamily. CMGC Ser/Thr protein kinase family. CDC2/CDKX subfamily. As to quaternary structure, forms a stable but non-covalent complex with a regulatory subunit and with a cyclin.

It catalyses the reaction L-seryl-[protein] + ATP = O-phospho-L-seryl-[protein] + ADP + H(+). The catalysed reaction is L-threonyl-[protein] + ATP = O-phospho-L-threonyl-[protein] + ADP + H(+). With respect to regulation, phosphorylation at Ser-15 or Tyr-16 inactivates the enzyme, while phosphorylation at Thr-160 activates it. In terms of biological role, probably involved in the control of the cell cycle. The polypeptide is Cell division control protein 2 homolog 1 (CRK1) (Trypanosoma brucei brucei).